The chain runs to 195 residues: ADP-ribosylation factor L (195 aa).

Residue G2 is the site of N-myristoyl glycine attachment. Residues 25 to 32, 72 to 76, and 131 to 134 each bind GTP; these read GLENSGKT, DLLYP, and NKQD.

This sequence belongs to the small GTPase superfamily. Arf family.

Its function is as follows. May be involved in trafficking events within the endosomal system. In Dictyostelium discoideum (Social amoeba), this protein is ADP-ribosylation factor L (arrL).